A 142-amino-acid polypeptide reads, in one-letter code: Galactose-6-phosphate isomerase subunit LacA (142 aa).

Belongs to the LacAB/RpiB family. As to quaternary structure, heteromultimeric protein consisting of LacA and LacB.

The enzyme catalyses aldehydo-D-galactose 6-phosphate = keto-D-tagatose 6-phosphate. It participates in carbohydrate metabolism; D-galactose 6-phosphate degradation; D-tagatose 6-phosphate from D-galactose 6-phosphate: step 1/1. In Enterococcus faecalis (strain ATCC 700802 / V583), this protein is Galactose-6-phosphate isomerase subunit LacA.